A 215-amino-acid chain; its full sequence is GTP-binding nuclear protein Ran (215 aa).

The Small GTPase Ran-type domain maps to 6–170 (DIPTFKLVLV…LWLVRKLLGD (165 aa)). Residues 17–24 (DGGTGKTT), 35–41 (EKKYVAT), Gly-67, 121–124 (NFVD), and 149–151 (SAK) contribute to the GTP site. The tract at residues 36–44 (KKYVATLGV) is switch-I. Residues 67–83 (GQEKFGGLRDGYYIQGQ) are switch-II. The interval 210-215 (DDDEDL) is interaction with RANBP1.

This sequence belongs to the small GTPase superfamily. Ran family. As to quaternary structure, monomer. Interacts with RANGAP1, which promotes RAN-mediated GTP hydrolysis. Interacts with KPNB1. Interaction with KPNB1 inhibits RANGAP1-mediated stimulation of GTPase activity. Interacts with RCC1 which promotes the exchange of RAN-bound GDP by GTP. Interaction with KPNB1 inhibits RCC1-mediated exchange of RAN-bound GDP by GTP. Interacts (GTP-bound form) with TNPO1; the interaction is direct. Interacts with KPNB1 and with TNPO1; both inhibit RAN GTPase activity. Interacts (via C-terminus) with RANBP1, which alleviates the inhibition of RAN GTPase activity. Interacts with RANGRF, which promotes the release of bound guanine nucleotide. RANGRF and RCC1 compete for an overlapping binding site on RAN. Identified in a complex with KPNA2 and CSE1L; interaction with RANBP1 mediates dissociation of RAN from this complex. Interaction with both RANBP1 and KPNA2 promotes dissociation of the complex between RAN and KPNB1. Identified in a complex composed of RAN, RANGAP1 and RANBP1. Identified in a complex that contains TNPO1, RAN and RANBP1. Identified in a nuclear export complex with XPO1. Interaction with RANBP1 or RANBP2 induces a conformation change in the complex formed by XPO1 and RAN that triggers the release of the nuclear export signal of cargo proteins. Component of a nuclear export receptor complex composed of KPNB1, RAN, SNUPN and XPO1. The cofactor is Mg(2+).

The protein localises to the nucleus. Its subcellular location is the nucleus envelope. It is found in the cytoplasm. The protein resides in the cytosol. Its function is as follows. GTPase involved in nucleocytoplasmic transport, participating both to the import and the export from the nucleus of proteins and RNAs. Switches between a cytoplasmic GDP- and a nuclear GTP-bound state by nucleotide exchange and GTP hydrolysis. Nuclear import receptors such as importin beta bind their substrates only in the absence of GTP-bound RAN and release them upon direct interaction with GTP-bound RAN, while export receptors behave in the opposite way. Thereby, RAN controls cargo loading and release by transport receptors in the proper compartment and ensures the directionality of the transport. Interaction with RANBP1 induces a conformation change in the complex formed by XPO1 and RAN that triggers the release of the nuclear export signal of cargo proteins. RAN (GTP-bound form) triggers microtubule assembly at mitotic chromosomes and is required for normal mitotic spindle assembly and chromosome segregation. Required for normal progress through mitosis. The polypeptide is GTP-binding nuclear protein Ran (ran-1) (Onchocerca volvulus).